A 500-amino-acid polypeptide reads, in one-letter code: Glycerol kinase (500 aa).

T12 is a binding site for ADP. ATP contacts are provided by T12, T13, and S14. Sn-glycerol 3-phosphate is bound at residue T12. R16 lines the ADP pocket. Sn-glycerol 3-phosphate is bound by residues R82, E83, Y134, and D244. Glycerol contacts are provided by R82, E83, Y134, D244, and Q245. ADP is bound by residues T266 and G309. The ATP site is built by T266, G309, Q313, and G410. The ADP site is built by G410 and N414.

This sequence belongs to the FGGY kinase family. Homotetramer and homodimer (in equilibrium).

The catalysed reaction is glycerol + ATP = sn-glycerol 3-phosphate + ADP + H(+). It functions in the pathway polyol metabolism; glycerol degradation via glycerol kinase pathway; sn-glycerol 3-phosphate from glycerol: step 1/1. Its activity is regulated as follows. Activated by phosphorylation and inhibited by fructose 1,6-bisphosphate (FBP). In terms of biological role, key enzyme in the regulation of glycerol uptake and metabolism. Catalyzes the phosphorylation of glycerol to yield sn-glycerol 3-phosphate. This is Glycerol kinase from Alkaliphilus metalliredigens (strain QYMF).